A 168-amino-acid polypeptide reads, in one-letter code: Aphid transmission protein (168 aa).

The protein belongs to the caulimoviridae ORF II family.

In terms of biological role, this protein is involved in virus transmission. This Carnation etched ring virus (CERV) protein is Aphid transmission protein.